Consider the following 126-residue polypeptide: uncharacterized protein (126 aa).

A Phosphothreonine modification is found at threonine 68.

This is an uncharacterized protein from Pseudomonas aeruginosa (strain UCBPP-PA14).